The following is a 165-amino-acid chain: Nutritionally-regulated adipose and cardiac-enriched protein (165 aa).

A disordered region spans residues 1-47 (MRSAARVSRSNSHPRTRHPTRENEGTTWGSQPSRTERDGDRKCPPSI). Residues 34-43 (RTERDGDRKC) show a composition bias toward basic and acidic residues. The helical transmembrane segment at 112–132 (GSLFLWLTLCALLGVVLVLYC) threads the bilayer.

As to expression, predominantly expressed in white adipose tissue (at protein level) and brown adipose tissue. Also detected in heart.

It localises to the cell membrane. The polypeptide is Nutritionally-regulated adipose and cardiac-enriched protein (Nrac) (Mus musculus (Mouse)).